Consider the following 29-residue polypeptide: Varv peptide F (29 aa).

Positions 1 to 29 form a cross-link, cyclopeptide (Gly-Asn); sequence GVPICGETCTLGTCYTAGCSCSWPVCTRN. Disulfide bonds link C5–C19, C9–C21, and C14–C26.

Post-translationally, this is a cyclic peptide.

Its function is as follows. Probably participates in a plant defense mechanism. Has cytotoxic activity against a variety of drug-resistant and drug-sensitive human tumor cell lines. The chain is Varv peptide F from Viola arvensis (European field pansy).